The following is a 266-amino-acid chain: Apolipoprotein A-I (266 aa).

The N-terminal stretch at 1 to 18 is a signal peptide; that stretch reads MKAVVLTLAVLFLTGSQA. 2 tandem repeats follow at residues 67-88 and 89-110. Residues 67–266 form a 10 X approximate tandem repeats region; it reads LKLLDNWDSL…DEATKKLNSQ (200 aa). At M109 the chain carries Methionine sulfoxide. One copy of the 3; half-length repeat lies at 111 to 121; the sequence is KDLEEVKKKVQ. A run of 5 repeats spans residues 122–143, 144–165, 166–187, 188–209, and 210–231. The 9; half-length repeat unit spans residues 232 to 242; it reads PALEDLRQGLL. The stretch at 243-266 is repeat 10; that stretch reads PVLENFRDSLLAAVDEATKKLNSQ.

The protein belongs to the apolipoprotein A1/A4/E family. As to quaternary structure, homodimer. Interacts with APOA1BP and CLU. Component of a sperm activating protein complex (SPAP), consisting of APOA1, an immunoglobulin heavy chain, an immunoglobulin light chain and albumin. Interacts with NDRG1. Interacts with SCGB3A2. Interacts with NAXE and YJEFN3. Glycosylated. Post-translationally, palmitoylated. In terms of processing, phosphorylation sites are present in the extracellular medium.

It localises to the secreted. Functionally, participates in the reverse transport of cholesterol from tissues to the liver for excretion by promoting cholesterol efflux from tissues and by acting as a cofactor for the lecithin cholesterol acyltransferase (LCAT). As part of the SPAP complex, activates spermatozoa motility. This is Apolipoprotein A-I (APOA1) from Neomonachus schauinslandi (Hawaiian monk seal).